The primary structure comprises 103 residues: Putative truncated guanine nucleotide exchange factor YLL017W (103 aa).

Residues 26–97 (QPIDVVECTY…PPSFYTVHSK (72 aa)) enclose the SH3 domain.

The protein is Putative truncated guanine nucleotide exchange factor YLL017W of Saccharomyces cerevisiae (strain ATCC 204508 / S288c) (Baker's yeast).